The following is a 302-amino-acid chain: Succinate--CoA ligase [ADP-forming] subunit alpha (302 aa).

Residues T17–T20, K43, and I96–E98 contribute to the CoA site. Y159 serves as a coordination point for substrate. Catalysis depends on H247, which acts as the Tele-phosphohistidine intermediate.

The protein belongs to the succinate/malate CoA ligase alpha subunit family. As to quaternary structure, heterotetramer of two alpha and two beta subunits.

It carries out the reaction succinate + ATP + CoA = succinyl-CoA + ADP + phosphate. The catalysed reaction is GTP + succinate + CoA = succinyl-CoA + GDP + phosphate. It participates in carbohydrate metabolism; tricarboxylic acid cycle; succinate from succinyl-CoA (ligase route): step 1/1. Functionally, succinyl-CoA synthetase functions in the citric acid cycle (TCA), coupling the hydrolysis of succinyl-CoA to the synthesis of either ATP or GTP and thus represents the only step of substrate-level phosphorylation in the TCA. The alpha subunit of the enzyme binds the substrates coenzyme A and phosphate, while succinate binding and nucleotide specificity is provided by the beta subunit. This chain is Succinate--CoA ligase [ADP-forming] subunit alpha, found in Staphylococcus aureus (strain COL).